The following is a 429-amino-acid chain: Glutamate-1-semialdehyde 2,1-aminomutase (429 aa).

Residue Lys270 is modified to N6-(pyridoxal phosphate)lysine.

Belongs to the class-III pyridoxal-phosphate-dependent aminotransferase family. HemL subfamily. As to quaternary structure, homodimer. Pyridoxal 5'-phosphate serves as cofactor.

It is found in the cytoplasm. It catalyses the reaction (S)-4-amino-5-oxopentanoate = 5-aminolevulinate. The protein operates within porphyrin-containing compound metabolism; protoporphyrin-IX biosynthesis; 5-aminolevulinate from L-glutamyl-tRNA(Glu): step 2/2. This is Glutamate-1-semialdehyde 2,1-aminomutase from Cupriavidus pinatubonensis (strain JMP 134 / LMG 1197) (Cupriavidus necator (strain JMP 134)).